Reading from the N-terminus, the 633-residue chain is MINITLPDGSRREFENPVSVMDVAQSIGAGLAKATIAGSVDGVLVDASDVIDHDASLRIITAKDEEGVEIIRHSSAHLVGHAVKQLYPDVKMVIGPVIAEGFYYDIYSERPFTPEDMAAIEKRMGELIAQDYDVIKKVTPRAEVIEIFKARGEDYKLRLIEDMSDDIQAMGMYYHQEYVDMCRGPHVPNTRFLKAFKLTRISGAYWRGDAQNEQLQRIYGTAWADKKQLEAYIKRIEEAEMRDHRRIGKQQDLFHLQEEAPGLVFWHPKGWALWQVVEQYMRKVYRKTGYGEVRCPQILDVSLWQKSGHWDNYQDAMFFTESEKRTYALKPMNCPGHVQVFNQGLHSYRDLPIRYGEFGACHRNEPSGALHGILRVRGFTQDDGHVFCTENQVEAEVTAFHQQALAVYQHFGFDEIQVKIALRPESRLGDDATWDKAEGALRSALSSNGVEWQELPGEGAFYGPKIEYHLKDAIGRTWQLGTMQVDFMMPGRLGAEYVDENSQKKHPVMLHRAIVGSMERFLGILIEHHAGQFPAWLAPTQVVVANITDAQAEYVSDVTKTLADQGFRVSADLRNEKIGYKIREHTLQRVPYLLVIGDREKENGAVAVRTRSGEDLGSMSLQAFIERLQAEGA.

The 61-residue stretch at 1–61 folds into the TGS domain; the sequence is MINITLPDGS…DHDASLRIIT (61 aa). A catalytic region spans residues 243–534; the sequence is DHRRIGKQQD…LIEHHAGQFP (292 aa). Positions 334, 385, and 511 each coordinate Zn(2+).

Belongs to the class-II aminoacyl-tRNA synthetase family. In terms of assembly, homodimer. Zn(2+) is required as a cofactor.

The protein localises to the cytoplasm. The catalysed reaction is tRNA(Thr) + L-threonine + ATP = L-threonyl-tRNA(Thr) + AMP + diphosphate + H(+). Catalyzes the attachment of threonine to tRNA(Thr) in a two-step reaction: L-threonine is first activated by ATP to form Thr-AMP and then transferred to the acceptor end of tRNA(Thr). Also edits incorrectly charged L-seryl-tRNA(Thr). The sequence is that of Threonine--tRNA ligase from Stenotrophomonas maltophilia (strain R551-3).